A 431-amino-acid polypeptide reads, in one-letter code: Protein translocase subunit SecY (431 aa).

Topologically, residues 1–17 are cytoplasmic; it reads MFKTISNFMRVSDIRNK. A helical membrane pass occupies residues 18 to 38; sequence IIFTLLMLIVFRIGAFIPVPY. Residues 39–66 are Extracellular-facing; sequence VNAEALQAQSQMGVFDLLNTFGGGALYQ. Residues 67-87 traverse the membrane as a helical segment; sequence FSIFAMGITPYITASIIIQLL. Topologically, residues 88–115 are cytoplasmic; it reads QMDVVPKFTEWSKQGEVGRRKLAQFTRY. Residues 116–136 form a helical membrane-spanning segment; it reads FTIVLGFIQALGMSYGFNNLA. Over 137–145 the chain is Extracellular; sequence NGMLIEKSG. Residues 146 to 166 form a helical membrane-spanning segment; that stretch reads VSTYLIIALVLTGGTAFLMWL. Topologically, residues 167–177 are cytoplasmic; it reads GEQITSHGVGN. The chain crosses the membrane as a helical span at residues 178 to 198; it reads GISIIIFAGIVSSIPKTIGQI. Residues 199 to 213 lie on the Extracellular side of the membrane; sequence YETQFVGSNDQLFIH. The helical transmembrane segment at 214–234 threads the bilayer; it reads IVKVALLVIAILAVIVGVIFI. At 235-261 the chain is on the cytoplasmic side; the sequence is QQAVRKIAIQYAKGTGRSPAGGGQSTH. A helical transmembrane segment spans residues 262 to 282; sequence LPLKVNPAGVIPVIFAVAFLI. Residues 283-308 are Extracellular-facing; it reads TPRTIASFFGTNDVTKWIQNNFDNTH. Residues 309 to 329 form a helical membrane-spanning segment; it reads PVGMAIYVALIIAFTYFYAFV. Residues 330 to 368 lie on the Cytoplasmic side of the membrane; it reads QVNPEQMADNLKKQGGYIPGVRPGKMTQDRITSILYRLT. 2 helical membrane-spanning segments follow: residues 369–389 and 390–410; these read FVGS…IQFA and GLPQ…GVAL. Residues 411-431 lie on the Cytoplasmic side of the membrane; that stretch reads ETMKQLESQLVKRNYRGFMKN.

It belongs to the SecY/SEC61-alpha family. Component of the Sec protein translocase complex. Heterotrimer consisting of SecY, SecE and SecG subunits. The heterotrimers can form oligomers, although 1 heterotrimer is thought to be able to translocate proteins. Interacts with the ribosome. Interacts with SecDF, and other proteins may be involved. Interacts with SecA. Interacts with FloT.

The protein resides in the cell membrane. It is found in the membrane raft. In terms of biological role, the central subunit of the protein translocation channel SecYEG. Consists of two halves formed by TMs 1-5 and 6-10. These two domains form a lateral gate at the front which open onto the bilayer between TMs 2 and 7, and are clamped together by SecE at the back. The channel is closed by both a pore ring composed of hydrophobic SecY resides and a short helix (helix 2A) on the extracellular side of the membrane which forms a plug. The plug probably moves laterally to allow the channel to open. The ring and the pore may move independently. This is Protein translocase subunit SecY from Bacillus subtilis (strain 168).